The primary structure comprises 528 residues: U6 snRNA (guanine-N(2))-methyltransferase THUMPD2 (528 aa).

The segment covering 154-168 (QEVAKDHGESQEDKL) has biased composition (basic and acidic residues). Disordered stretches follow at residues 154-200 (QEVA…ADAQ) and 437-460 (MKTL…RASS). The region spanning 162–266 (ESQEDKLLQG…DAYSVVGIPL (105 aa)) is the THUMP domain.

This sequence belongs to the methyltransferase superfamily. In terms of assembly, part of the heterodimeric THUMPD2-TRM112 methyltransferase complex; this complex forms an active tRNA methyltransferase, where TRMT112 acts as an activator of the catalytic subunit THUMPD2.

Its subcellular location is the nucleus. The catalysed reaction is guanosine in U6 snRNA + S-adenosyl-L-methionine = N(2)-methylguanosine in U6 snRNA + S-adenosyl-L-homocysteine + H(+). Catalytic subunit of the THUMPD2-TRM112 methyltransferase complex, that specifically mediates the S-adenosyl-L-methionine-dependent N(2)-methylation of guanosine nucleotides, most probably at position 72 (m2G72), in the U6snRNA of the major spliceosome. This modification in the U6 snRNA affects the constitutive splicing efficiency of introns that have suboptimal splice sites and can impact final mRNA levels. This Mus musculus (Mouse) protein is U6 snRNA (guanine-N(2))-methyltransferase THUMPD2.